We begin with the raw amino-acid sequence, 153 residues long: Endoribonuclease YbeY (153 aa).

Zn(2+)-binding residues include His114, His118, and His124.

Belongs to the endoribonuclease YbeY family. It depends on Zn(2+) as a cofactor.

The protein localises to the cytoplasm. Functionally, single strand-specific metallo-endoribonuclease involved in late-stage 70S ribosome quality control and in maturation of the 3' terminus of the 16S rRNA. The polypeptide is Endoribonuclease YbeY (Shewanella sp. (strain MR-4)).